A 570-amino-acid chain; its full sequence is Glycine--tRNA ligase (570 aa).

Substrate-binding residues include R99 and E165. ATP-binding positions include 197–199 (RNE), 207–212 (LRLREF), 324–325 (EC), and 443–446 (GIDR). Residue 212-216 (FTQAE) participates in substrate binding. 439 to 443 (EPSFG) provides a ligand contact to substrate.

The protein belongs to the class-II aminoacyl-tRNA synthetase family.

Its subcellular location is the cytoplasm. The enzyme catalyses tRNA(Gly) + glycine + ATP = glycyl-tRNA(Gly) + AMP + diphosphate. In terms of biological role, catalyzes the attachment of glycine to tRNA(Gly). This Thermococcus kodakarensis (strain ATCC BAA-918 / JCM 12380 / KOD1) (Pyrococcus kodakaraensis (strain KOD1)) protein is Glycine--tRNA ligase.